The sequence spans 76 residues: Centromere protein W (76 aa).

Belongs to the CENP-W/WIP1 family. In terms of assembly, heterodimer with CENPT; this dimer coassembles with CENPS-CENPX heterodimers at centromeres to form the tetrameric CENP-T-W-S-X complex, which is a subcomplex of the large constitutive centromere-associated network (CCAN, also known as the interphase centromere complex or ICEN). Interacts with NPM1.

It is found in the nucleus. The protein resides in the chromosome. It localises to the centromere. The protein localises to the kinetochore. In terms of biological role, component of the CENPA-NAC (nucleosome-associated) complex, a complex that plays a central role in assembly of kinetochore proteins, mitotic progression and chromosome segregation. The CENPA-NAC complex recruits the CENPA-CAD (nucleosome distal) complex and may be involved in incorporation of newly synthesized CENPA into centromeres. Part of a nucleosome-associated complex that binds specifically to histone H3-containing nucleosomes at the centromere, as opposed to nucleosomes containing CENPA. Component of the heterotetrameric CENP-T-W-S-X complex that binds and supercoils DNA, and plays an important role in kinetochore assembly. CENPW has a fundamental role in kinetochore assembly and function. It is one of the inner kinetochore proteins, with most further proteins binding downstream. Required for normal chromosome organization and normal progress through mitosis. This chain is Centromere protein W (CENPW), found in Gallus gallus (Chicken).